We begin with the raw amino-acid sequence, 145 residues long: UPF0735 ACT domain-containing protein CLL_A2896 (145 aa).

In terms of domain architecture, ACT spans 69–144 (TFNLIVKDQT…YVEKIEFVAM (76 aa)).

Belongs to the UPF0735 family.

This Clostridium botulinum (strain Eklund 17B / Type B) protein is UPF0735 ACT domain-containing protein CLL_A2896.